A 494-amino-acid polypeptide reads, in one-letter code: Tripartite motif-containing protein 5 (494 aa).

At Ala-2 the chain carries N-acetylalanine. Residues 15–59 (CPICLELLTEPLSLDCGHSFCQACITANHKESTPHQGERSCPLCR) form an RING-type zinc finger. Ser-86 is subject to Phosphoserine. The segment at 91–132 (QKVGHCARHGEKLLLFCEQDGNVICWLCERSQEHRGHHTFLV) adopts a B box-type zinc-finger fold. Cys-96, His-99, Cys-118, and His-124 together coordinate Zn(2+). Residues 131 to 223 (LVEEVAEKYQ…RLVQSESDMA (93 aa)) adopt a coiled-coil conformation. Positions 186-199 (FKQLRDILDCEESK) are required for interaction with GABARAP and for autophagy. Residues 280-494 (PDLKGMLQAF…LPMTLCSPSS (215 aa)) form the B30.2/SPRY domain.

This sequence belongs to the TRIM/RBCC family. Can form homodimers and homotrimers. In addition to lower-order dimerization, also exhibits a higher-order multimerization and both low- and high-order multimerizations are essential for its restriction activity. Interacts with BTBD1 and BTBD2. Interacts with PSMC4, PSMC5, PSMD7 and HSPA8/HSC70. Interacts (via B30.2/SPRY domain) with HSPA1A/B. Interacts with PSMC2, MAP3K7/TAK1, TAB2 and TAB3. Interacts with SQSTM1. Interacts with TRIM6 and TRIM34. Interacts with ULK1 (phosphorylated form), GABARAP, GABARAPL1, GABARAPL2, MAP1LC3A, MAP1LC3C and BECN1. Post-translationally, degraded in a proteasome-independent fashion in the absence of viral infection but in a proteasome-dependent fashion following exposure to restriction sensitive virus. In terms of processing, autoubiquitinated in a RING finger- and UBE2D2-dependent manner. Monoubiquitinated by TRIM21. Deubiquitinated by Yersinia YopJ. Ubiquitination may not lead to proteasomal degradation.

The protein localises to the cytoplasm. The protein resides in the nucleus. It catalyses the reaction S-ubiquitinyl-[E2 ubiquitin-conjugating enzyme]-L-cysteine + [acceptor protein]-L-lysine = [E2 ubiquitin-conjugating enzyme]-L-cysteine + N(6)-ubiquitinyl-[acceptor protein]-L-lysine.. It functions in the pathway protein modification; protein ubiquitination. Capsid-specific restriction factor that prevents infection from non-host-adapted retroviruses. Blocks viral replication early in the life cycle, after viral entry but before reverse transcription. In addition to acting as a capsid-specific restriction factor, also acts as a pattern recognition receptor that activates innate immune signaling in response to the retroviral capsid lattice. Binding to the viral capsid triggers its E3 ubiquitin ligase activity, and in concert with the heterodimeric ubiquitin conjugating enzyme complex UBE2V1-UBE2N (also known as UBC13-UEV1A complex) generates 'Lys-63'-linked polyubiquitin chains, which in turn are catalysts in the autophosphorylation of the MAP3K7/TAK1 complex (includes TAK1, TAB2, and TAB3). Activation of the MAP3K7/TAK1 complex by autophosphorylation results in the induction and expression of NF-kappa-B and MAPK-responsive inflammatory genes, thereby leading to an innate immune response in the infected cell. Plays a role in regulating autophagy through activation of autophagy regulator BECN1 by causing its dissociation from its inhibitors BCL2 and TAB2. In Saguinus oedipus (Cotton-top tamarin), this protein is Tripartite motif-containing protein 5 (TRIM5).